We begin with the raw amino-acid sequence, 425 residues long: AP-3 complex subunit mu (425 aa).

Residues 175 to 423 (TNEFFIHVLE…TIIAQNVSFR (249 aa)) enclose the MHD domain.

Belongs to the adaptor complexes medium subunit family.

The protein localises to the cytoplasm. It localises to the cytoskeleton. The protein resides in the microtubule organizing center. Its subcellular location is the spindle pole body. It is found in the membrane. The protein localises to the golgi apparatus. It localises to the cytoplasmic vesicle membrane. Part of the AP-3 complex, an adaptor-related complex which is not clathrin-associated. The complex is associated with the Golgi region as well as more peripheral structures. It facilitates the budding of vesicles from the Golgi membrane and may be directly involved in trafficking to the vacuole. This Schizosaccharomyces pombe (strain 972 / ATCC 24843) (Fission yeast) protein is AP-3 complex subunit mu (apm3).